The primary structure comprises 152 residues: Ribosome maturation factor RimP (152 aa).

Belongs to the RimP family.

The protein resides in the cytoplasm. Required for maturation of 30S ribosomal subunits. The chain is Ribosome maturation factor RimP from Pseudomonas putida (strain GB-1).